The following is a 120-amino-acid chain: Large ribosomal subunit protein uL22 (120 aa).

Belongs to the universal ribosomal protein uL22 family. Part of the 50S ribosomal subunit.

Its function is as follows. This protein binds specifically to 23S rRNA; its binding is stimulated by other ribosomal proteins, e.g. L4, L17, and L20. It is important during the early stages of 50S assembly. It makes multiple contacts with different domains of the 23S rRNA in the assembled 50S subunit and ribosome. In terms of biological role, the globular domain of the protein is located near the polypeptide exit tunnel on the outside of the subunit, while an extended beta-hairpin is found that lines the wall of the exit tunnel in the center of the 70S ribosome. This is Large ribosomal subunit protein uL22 from Corynebacterium urealyticum (strain ATCC 43042 / DSM 7109).